Reading from the N-terminus, the 67-residue chain is Large ribosomal subunit protein bL31 (67 aa).

Zn(2+) is bound by residues cysteine 16, cysteine 18, cysteine 38, and cysteine 41.

The protein belongs to the bacterial ribosomal protein bL31 family. Type A subfamily. Part of the 50S ribosomal subunit. Zn(2+) serves as cofactor.

Binds the 23S rRNA. This Thioalkalivibrio sulfidiphilus (strain HL-EbGR7) protein is Large ribosomal subunit protein bL31.